A 369-amino-acid chain; its full sequence is Uroporphyrinogen decarboxylase (369 aa).

Residues 36–40, Asp86, Tyr162, Ser217, and His342 contribute to the substrate site; that span reads RQAGR.

This sequence belongs to the uroporphyrinogen decarboxylase family. Homodimer.

Its subcellular location is the cytoplasm. It carries out the reaction uroporphyrinogen III + 4 H(+) = coproporphyrinogen III + 4 CO2. It participates in porphyrin-containing compound metabolism; protoporphyrin-IX biosynthesis; coproporphyrinogen-III from 5-aminolevulinate: step 4/4. Catalyzes the decarboxylation of four acetate groups of uroporphyrinogen-III to yield coproporphyrinogen-III. This is Uroporphyrinogen decarboxylase from Albidiferax ferrireducens (strain ATCC BAA-621 / DSM 15236 / T118) (Rhodoferax ferrireducens).